Reading from the N-terminus, the 298-residue chain is Leucine-rich repeat-containing protein 55 (298 aa).

Positions 1–34 are cleaved as a signal peptide; the sequence is MGDTWAQLPWPGPPHSALLLVFFLLAAGVMHSDA. Residues 35–65 form the LRRNT domain; the sequence is GTSCPVLCTCRNQVVDCSNQRLFSVPPDLPM. 2 disulfides stabilise this stretch: cysteine 38–cysteine 44 and cysteine 42–cysteine 51. 5 LRR repeats span residues 66 to 87, 90 to 111, 114 to 135, 138 to 160, and 163 to 186; these read DTRN…YLTC, ELRV…LFLH, RLAH…MFRE, GLVH…AFQG, and HLRD…EGLP. Residues 196–251 form the LRRCT domain; the sequence is NPWVCGCTMEPLLKWLRNRIQRCTADSQLAECRGPPEVEGAPLFSLTEESFKACHL. 2 disulfide bridges follow: cysteine 200–cysteine 227 and cysteine 202–cysteine 249. Residues 259 to 279 traverse the membrane as a helical segment; sequence LFIAFVGFVVSIASVATNFLL.

As to quaternary structure, interacts with KCNMA1.

It is found in the cell membrane. In terms of biological role, auxiliary protein of the large-conductance, voltage and calcium-activated potassium channel (BK alpha). Modulates gating properties by producing a marked shift in the BK channel's voltage dependence of activation in the hyperpolarizing direction, and in the absence of calcium. The chain is Leucine-rich repeat-containing protein 55 (Lrrc55) from Mus musculus (Mouse).